Here is a 299-residue protein sequence, read N- to C-terminus: Farnesyl diphosphate synthase (299 aa).

Residues Lys45, Arg48, and His77 each coordinate isopentenyl diphosphate. Residues Asp84 and Asp90 each contribute to the Mg(2+) site. Arg95 is a (2E)-geranyl diphosphate binding site. Arg96 contributes to the isopentenyl diphosphate binding site. The (2E)-geranyl diphosphate site is built by Lys181, Thr182, Gln220, and Lys237.

The protein belongs to the FPP/GGPP synthase family. Mg(2+) is required as a cofactor.

It is found in the cytoplasm. It catalyses the reaction isopentenyl diphosphate + (2E)-geranyl diphosphate = (2E,6E)-farnesyl diphosphate + diphosphate. The sequence is that of Farnesyl diphosphate synthase (ispA) from Escherichia coli (strain K12).